The primary structure comprises 394 residues: Flagellin A (394 aa).

This sequence belongs to the bacterial flagellin family.

It is found in the secreted. It localises to the bacterial flagellum. In terms of biological role, flagellin is the subunit protein which polymerizes to form the filaments of bacterial flagella. Homomer of FlaA is able to form a functional filament. This chain is Flagellin A (flaA), found in Rhizobium meliloti (strain 1021) (Ensifer meliloti).